Reading from the N-terminus, the 883-residue chain is Translation initiation factor IF-2 (883 aa).

Residues 32-45 are compositionally biased toward polar residues; sequence NDLNGKNNSNSSIN. Disordered regions lie at residues 32–216 and 251–275; these read NDLN…QNKY and RKLGEKKKQQQESQKSYKRKKAETE. Residues 46–62 are compositionally biased toward basic and acidic residues; the sequence is LDKHNNKVEYSQNRDNR. The segment covering 75–216 has biased composition (polar residues); sequence GGYSQNRDNR…VGKNTSQNKY (142 aa). Residues 251 to 260 show a composition bias toward basic and acidic residues; sequence RKLGEKKKQQ. Positions 381–554 constitute a tr-type G domain; it reads EKPPVITIMG…DMMLLKANPS (174 aa). Positions 390 to 397 are G1; sequence GHVDHGKT. 390–397 contacts GTP; the sequence is GHVDHGKT. Residues 415–419 form a G2 region; that stretch reads GITQH. Residues 436-439 form a G3 region; sequence DTPG. GTP contacts are provided by residues 436 to 440 and 490 to 493; these read DTPGH and NKID. Residues 490–493 form a G4 region; that stretch reads NKID. The tract at residues 526 to 528 is G5; the sequence is SAL.

It belongs to the TRAFAC class translation factor GTPase superfamily. Classic translation factor GTPase family. IF-2 subfamily.

The protein localises to the cytoplasm. Functionally, one of the essential components for the initiation of protein synthesis. Protects formylmethionyl-tRNA from spontaneous hydrolysis and promotes its binding to the 30S ribosomal subunits. Also involved in the hydrolysis of GTP during the formation of the 70S ribosomal complex. In Borrelia garinii subsp. bavariensis (strain ATCC BAA-2496 / DSM 23469 / PBi) (Borreliella bavariensis), this protein is Translation initiation factor IF-2.